A 160-amino-acid chain; its full sequence is Nitrate reductase [NADH] (160 aa).

Residue Thr-37 coordinates FAD.

It belongs to the nitrate reductase family. In terms of assembly, homodimer. It depends on FAD as a cofactor. Heme serves as cofactor. The cofactor is Mo-molybdopterin.

It carries out the reaction nitrite + NAD(+) + H2O = nitrate + NADH + H(+). Functionally, nitrate reductase is a key enzyme involved in the first step of nitrate assimilation in plants, fungi and bacteria. The chain is Nitrate reductase [NADH] (NIA) from Lotus tetragonolobus (Winged pea).